Consider the following 274-residue polypeptide: Large ribosomal subunit protein uL2 (274 aa).

Disordered stretches follow at residues 40–59 and 223–274; these read SGGR…GGHK and VAMN…RRSR. 2 stretches are compositionally biased toward basic residues: residues 49–59 and 256–274; these read VTRRHQGGGHK and YRTR…RRSR.

Belongs to the universal ribosomal protein uL2 family. As to quaternary structure, part of the 50S ribosomal subunit. Forms a bridge to the 30S subunit in the 70S ribosome.

Its function is as follows. One of the primary rRNA binding proteins. Required for association of the 30S and 50S subunits to form the 70S ribosome, for tRNA binding and peptide bond formation. It has been suggested to have peptidyltransferase activity; this is somewhat controversial. Makes several contacts with the 16S rRNA in the 70S ribosome. This Acidithiobacillus ferrooxidans (strain ATCC 23270 / DSM 14882 / CIP 104768 / NCIMB 8455) (Ferrobacillus ferrooxidans (strain ATCC 23270)) protein is Large ribosomal subunit protein uL2.